We begin with the raw amino-acid sequence, 72 residues long: Translation initiation factor IF-1 (72 aa).

An S1-like domain is found at 1 to 72 (MARDDVIEVD…DKGRITFRYK (72 aa)).

Belongs to the IF-1 family. As to quaternary structure, component of the 30S ribosomal translation pre-initiation complex which assembles on the 30S ribosome in the order IF-2 and IF-3, IF-1 and N-formylmethionyl-tRNA(fMet); mRNA recruitment can occur at any time during PIC assembly.

It localises to the cytoplasm. In terms of biological role, one of the essential components for the initiation of protein synthesis. Stabilizes the binding of IF-2 and IF-3 on the 30S subunit to which N-formylmethionyl-tRNA(fMet) subsequently binds. Helps modulate mRNA selection, yielding the 30S pre-initiation complex (PIC). Upon addition of the 50S ribosomal subunit IF-1, IF-2 and IF-3 are released leaving the mature 70S translation initiation complex. This is Translation initiation factor IF-1 from Helicobacter pylori (strain HPAG1).